The chain runs to 695 residues: Lactotransferrin (695 aa).

The N-terminal stretch at 1 to 6 (LGLCLA) is a signal peptide. 2 Transferrin-like domains span residues 12-339 (VRWC…NLRE) and 351-680 (VVWC…NLRR). 2 disulfide bridges follow: C15–C51 and C25–C42. D66 contacts Fe(3+). K79 is an active-site residue. Y98 contributes to the Fe(3+) binding site. 5 cysteine pairs are disulfide-bonded: C121/C204, C163/C179, C166/C189, C176/C187, and C237/C251. Residues T123, R127, A129, and G130 each contribute to the hydrogencarbonate site. N143 carries an N-linked (GlcNAc...) asparagine glycan. Y198 serves as a coordination point for Fe(3+). H259 is a binding site for Fe(3+). The active-site Nucleophile is the S265. A glycan (N-linked (GlcNAc...) asparagine) is linked at N287. 2 disulfide bridges follow: C354–C386 and C364–C377. D401 contributes to the Fe(3+) binding site. Disulfide bonds link C411–C690, C431–C653, C463–C538, C487–C681, C497–C511, C508–C521, C579–C593, and C631–C636. P436 contacts D-glucose. Residue Y439 participates in Fe(3+) binding. Residues T465, R469, A471, and A472 each contribute to the hydrogencarbonate site. Residue N482 is glycosylated (N-linked (GlcNAc...) asparagine). Y532 is a binding site for Fe(3+). N600 is a D-glucose binding site. Position 601 (H601) interacts with Fe(3+). Y666 is a binding site for D-glucose.

It belongs to the transferrin family. As to quaternary structure, monomer. Found in a complex with LTF, CLU, EPPIN and SEMG1. Found in a complex with MPO and LTF; interacts directly with CP, allows Fe(3+) incorporation into LTF and activation of CP ferroxidase activity. In terms of processing, poly-N-acetyllactosaminic carbohydrate moiety seems to be needed for TLR4 activation.

The protein resides in the secreted. It is found in the cytoplasmic granule. Its function is as follows. Transferrins are iron binding transport proteins which can bind two Fe(3+) ions in association with the binding of an anion, usually bicarbonate. In terms of biological role, major iron-binding and multifunctional protein found in exocrine fluids such as breast milk and mucosal secretions. Has antimicrobial activity, which depends on the extracellular cation concentration. Antimicrobial properties include bacteriostasis, which is related to its ability to sequester free iron and thus inhibit microbial growth, as well as direct bactericidal properties leading to the release of lipopolysaccharides from the bacterial outer membrane. Can also prevent bacterial biofilm development in P.aeruginosa infection. Has weak antifungal activity against C.albicans. Has anabolic, differentiating and anti-apoptotic effects on osteoblasts and can also inhibit osteoclastogenesis, possibly playing a role in the regulation of bone growth. Promotes binding of species C adenoviruses to epithelial cells, promoting adenovirus infection. Can inhibit papillomavirus infections. Stimulates the TLR4 signaling pathway leading to NF-kappa-B activation and subsequent pro-inflammatory cytokine production while also interfering with the lipopolysaccharide (LPS)-stimulated TLR4 signaling. Inhibits neutrophil granulocyte migration to sites of apoptosis, when secreted by apoptotic cells. Stimulates VEGFA-mediated endothelial cell migration and proliferation. Binds heparin, chondroitin sulfate and possibly other glycosaminoglycans (GAGs). Also binds specifically to pneumococcal surface protein A (PspA), the lipid A portion of bacterial lipopolysaccharide (LPS), lysozyme and DNA. Functionally, lactoferricin binds to the bacterial surface and is crucial for the bactericidal functions. Has some antiviral activity against papillomavirus infection. N-terminal region shows strong antifungal activity against C.albicans. Contains two BBXB heparin-binding consensus sequences that appear to form the predominate functional GAG-binding site. The lactotransferrin transferrin-like domain 1 functions as a serine protease of the peptidase S60 family that cuts arginine rich regions. This function contributes to the antimicrobial activity. Shows a preferential cleavage at -Arg-Ser-Arg-Arg-|- and -Arg-Arg-Ser-Arg-|-, and of Z-Phe-Arg-|-aminomethylcoumarin sites. In Equus caballus (Horse), this protein is Lactotransferrin (LTF).